We begin with the raw amino-acid sequence, 663 residues long: Inner nuclear membrane protein HEH2 (663 aa).

2 disordered regions span residues 46–188 (QRLQ…ELPN) and 267–289 (ISETFDNQDEEDTSRLSSKKNIR). Over residues 47–62 (RLQSSPEASKVRTSIQ) the composition is skewed to polar residues. Residues 91–123 (KTVKDENVETNKRKREQISTDNEAKMQIQEEKS) are compositionally biased toward basic and acidic residues. Serine 123 carries the phosphoserine modification. A compositionally biased stretch (basic residues) spans 124-134 (PKKKRKKRSSK). The Nuclear localization signal signature appears at 124-137 (PKKKRKKRSSKANK). Over residues 164-183 (EELHKKDSSDDKPRVKELPK) the composition is skewed to basic and acidic residues. The helical transmembrane segment at 317 to 337 (LFIWLWNGAIFLSIICPILFG) threads the bilayer.

As to quaternary structure, interacts with SRP1.

It localises to the nucleus inner membrane. In Saccharomyces cerevisiae (strain ATCC 204508 / S288c) (Baker's yeast), this protein is Inner nuclear membrane protein HEH2 (HEH2).